The following is a 164-amino-acid chain: Ribosome-binding factor A (164 aa).

The segment at Ala123 to Arg164 is disordered. Acidic residues predominate over residues Gly132–Glu149. Residues Ala155–Arg164 show a composition bias toward pro residues.

This sequence belongs to the RbfA family. Monomer. Binds 30S ribosomal subunits, but not 50S ribosomal subunits or 70S ribosomes.

The protein localises to the cytoplasm. In terms of biological role, one of several proteins that assist in the late maturation steps of the functional core of the 30S ribosomal subunit. Associates with free 30S ribosomal subunits (but not with 30S subunits that are part of 70S ribosomes or polysomes). Required for efficient processing of 16S rRNA. May interact with the 5'-terminal helix region of 16S rRNA. The chain is Ribosome-binding factor A from Rhodospirillum rubrum (strain ATCC 11170 / ATH 1.1.1 / DSM 467 / LMG 4362 / NCIMB 8255 / S1).